We begin with the raw amino-acid sequence, 240 residues long: uncharacterized protein (240 aa).

The tract at residues 1-27 is disordered; sequence MKDLQKKSSVRRQITNEDDERYGEDSI. Residues Ser59 and Ser95 each carry the phosphoserine modification. Positions 189–227 are disordered; that stretch reads RTPSPTGKSVGDEATSNNMHSSSAIRNPNGPTVDPEEGK. Residues 202 to 218 are compositionally biased toward polar residues; that stretch reads ATSNNMHSSSAIRNPNG.

This is an uncharacterized protein from Saccharomyces cerevisiae (strain ATCC 204508 / S288c) (Baker's yeast).